The chain runs to 117 residues: MMIEVLKSKIHCARVTEANLNYMGSITIDEDLLDAANMIPGEKVYIADNNNGERFETYIIKGERGSGKICLNGAAARKVQPDDIVIIMSYALMDFEEAKSFKPTVIFPDPATNSVVK.

S25 acts as the Schiff-base intermediate with substrate; via pyruvic acid in catalysis. S25 bears the Pyruvic acid (Ser) mark. T57 is a binding site for substrate. Y58 acts as the Proton donor in catalysis. 73-75 (GAA) serves as a coordination point for substrate.

It belongs to the PanD family. Heterooctamer of four alpha and four beta subunits. It depends on pyruvate as a cofactor. Is synthesized initially as an inactive proenzyme, which is activated by self-cleavage at a specific serine bond to produce a beta-subunit with a hydroxyl group at its C-terminus and an alpha-subunit with a pyruvoyl group at its N-terminus.

Its subcellular location is the cytoplasm. The catalysed reaction is L-aspartate + H(+) = beta-alanine + CO2. The protein operates within cofactor biosynthesis; (R)-pantothenate biosynthesis; beta-alanine from L-aspartate: step 1/1. In terms of biological role, catalyzes the pyruvoyl-dependent decarboxylation of aspartate to produce beta-alanine. The chain is Aspartate 1-decarboxylase from Bacteroides thetaiotaomicron (strain ATCC 29148 / DSM 2079 / JCM 5827 / CCUG 10774 / NCTC 10582 / VPI-5482 / E50).